The primary structure comprises 147 residues: Large ribosomal subunit protein uL13 (147 aa).

This sequence belongs to the universal ribosomal protein uL13 family. As to quaternary structure, part of the 50S ribosomal subunit.

This protein is one of the early assembly proteins of the 50S ribosomal subunit, although it is not seen to bind rRNA by itself. It is important during the early stages of 50S assembly. In Frankia casuarinae (strain DSM 45818 / CECT 9043 / HFP020203 / CcI3), this protein is Large ribosomal subunit protein uL13.